A 173-amino-acid chain; its full sequence is Alpha-crystallin A chain (173 aa).

The residue at position 1 (Met1) is an N-acetylmethionine. In terms of domain architecture, sHSP spans 52–162 (LFRGFMDSGI…SHSERPIPVS (111 aa)). Residues His100, Glu102, His107, and His154 each coordinate Zn(2+). Positions 146 to 173 (MMSGLDSSHSERPIPVSREEKPTSAPSS) are disordered. The span at 153 to 167 (SHSERPIPVSREEKP) shows a compositional bias: basic and acidic residues.

Belongs to the small heat shock protein (HSP20) family. Heteropolymer composed of three CRYAA and one CRYAB subunits. Inter-subunit bridging via zinc ions enhances stability, which is crucial as there is no protein turn over in the lens. Can also form homodimers and homotetramers (dimers of dimers) which serve as the building blocks of homooligomers. Within homooligomers, the zinc-binding motif is created from residues of 3 different molecules. His-100 and Glu-102 from one molecule are ligands of the zinc ion, and His-107 and His-154 residues from additional molecules complete the site with tetrahedral coordination geometry.

It localises to the cytoplasm. The protein localises to the nucleus. In terms of biological role, contributes to the transparency and refractive index of the lens. May act as a chaperone, preventing aggregation of various proteins under a wide range of stress conditions. The protein is Alpha-crystallin A chain (CRYAA) of Aquarana catesbeiana (American bullfrog).